The primary structure comprises 500 residues: Serine/threonine-protein phosphatase 2A 56 kDa regulatory subunit beta isoform (500 aa).

Positions 1–19 are enriched in low complexity; sequence METKLPPASTPTSPSSPGL. Disordered stretches follow at residues 1–55 and 474–500; these read METK…YQSN and GTQGTQGAREAPLQRFVPQVAATGGQS. 6 positions are modified to phosphoserine; by CLK2: serine 32, serine 35, serine 44, serine 46, serine 47, and serine 48. The segment covering 34–45 has biased composition (basic residues); the sequence is RSLRRARPRRSH.

It belongs to the phosphatase 2A regulatory subunit B56 family. In terms of assembly, component of the serine/threonine-protein phosphatase 2A complex (PP2A). This complex consists of a common heterodimeric core enzyme, composed of a 36 kDa catalytic subunit (subunit C) and a 65 kDa constant scaffold subunit (PR65 or subunit A), that associates with a variety of regulatory subunits. Proteins that associate with the core dimer include three families of regulatory subunits B (the R2/B/PR55/B55, R3/B''/PR72/PR130/PR59 and R5/B'/B56 families), the 48 kDa variable regulatory subunit, viral proteins, and cell signaling molecules. Interacts with SGO1. Interacts with AKT1. Highly expressed in brain.

It is found in the nucleus. As the regulatory component of the serine/threonine-protein phosphatase 2A (PP2A) holoenzyme, modulates substrate specificity, subcellular localization, and responsiveness to phosphorylation. The phosphorylated form mediates the interaction between PP2A and AKT1, leading to AKT1 dephosphorylation. The protein is Serine/threonine-protein phosphatase 2A 56 kDa regulatory subunit beta isoform (PPP2R5B) of Oryctolagus cuniculus (Rabbit).